The following is a 355-amino-acid chain: Methionine import ATP-binding protein MetN (355 aa).

Residues 8-250 (LKNIDITFTQ…PQEDLTQEFI (243 aa)) form the ABC transporter domain. 42–49 (GYSGAGKS) is a binding site for ATP.

Belongs to the ABC transporter superfamily. Methionine importer (TC 3.A.1.24) family. The complex is composed of two ATP-binding proteins (MetN), two transmembrane proteins (MetI) and a solute-binding protein (MetQ).

Its subcellular location is the cell membrane. It catalyses the reaction L-methionine(out) + ATP + H2O = L-methionine(in) + ADP + phosphate + H(+). The enzyme catalyses D-methionine(out) + ATP + H2O = D-methionine(in) + ADP + phosphate + H(+). Part of the ABC transporter complex MetNIQ involved in methionine import. Responsible for energy coupling to the transport system. The sequence is that of Methionine import ATP-binding protein MetN from Streptococcus thermophilus (strain CNRZ 1066).